The primary structure comprises 625 residues: Glyco-Gag protein (625 aa).

Residues 1-66 (LGDVSEASGA…SVFRRNRAAR (66 aa)) are Cytoplasmic-facing. Residues 67 to 86 (LVCLSIVLSFVCSLLFWTAS) traverse the membrane as a helical segment. Over 87 to 625 (KNMGQTVTTP…PQTSLLTLDD (539 aa)) the chain is Extracellular. N-linked (GlcNAc...) asparagine; by host glycosylation occurs at Asn-113. The interval 195–305 (PSPTAPILPS…STTSRAFPLR (111 aa)) is disordered. Asn-479 is a glycosylation site (N-linked (GlcNAc...) asparagine; by host). Basic and acidic residues-rich tracts occupy residues 522–553 (ETPEEREERVRRETEEKEERRRAEEEQKEKER) and 573–606 (RQDRQGGERRRPQLDKDQCAYCKEKGHWAKDCPK). A disordered region spans residues 522–625 (ETPEEREERV…PQTSLLTLDD (104 aa)).

In terms of processing, glycosylated by host. Post-translationally, cleaved by host near the middle of the molecule, releasing the c-terminal half containing capsid and nucleoprotein domains op GAG.

It localises to the host cell membrane. Functionally, plays a role in viral particle release. Presumably acts by facilitating the fission of the virion bud at the cell surface. May prevent the antiviral activity of murine APOBEC3. This chain is Glyco-Gag protein, found in AKV murine leukemia virus (AKR (endogenous) murine leukemia virus).